The sequence spans 381 residues: Alkanesulfonate monooxygenase (381 aa).

This sequence belongs to the SsuD family. In terms of assembly, homotetramer.

It carries out the reaction an alkanesulfonate + FMNH2 + O2 = an aldehyde + FMN + sulfite + H2O + 2 H(+). In terms of biological role, catalyzes the desulfonation of aliphatic sulfonates. The chain is Alkanesulfonate monooxygenase from Escherichia coli O127:H6 (strain E2348/69 / EPEC).